The chain runs to 138 residues: Small ribosomal subunit protein bS18m (138 aa).

The protein belongs to the bacterial ribosomal protein bS18 family. As to quaternary structure, component of the mitochondrial small ribosomal subunit. Mature mitochondrial ribosomes consist of a small (37S) and a large (54S) subunit. The 37S subunit contains at least 33 different proteins and 1 molecule of RNA (15S). The 54S subunit contains at least 45 different proteins and 1 molecule of RNA (21S).

The protein resides in the mitochondrion. This is Small ribosomal subunit protein bS18m (RSM18) from Saccharomyces cerevisiae (strain RM11-1a) (Baker's yeast).